The following is a 229-amino-acid chain: 3-dehydroquinate dehydratase (229 aa).

3-dehydroquinate-binding positions include 33-35 and Arg-65; that span reads EWR. His-121 (proton donor/acceptor) is an active-site residue. Lys-146 functions as the Schiff-base intermediate with substrate in the catalytic mechanism. 3 residues coordinate 3-dehydroquinate: Arg-188, Ser-207, and Gln-211.

Belongs to the type-I 3-dehydroquinase family. In terms of assembly, homodimer.

The enzyme catalyses 3-dehydroquinate = 3-dehydroshikimate + H2O. The protein operates within metabolic intermediate biosynthesis; chorismate biosynthesis; chorismate from D-erythrose 4-phosphate and phosphoenolpyruvate: step 3/7. Functionally, involved in the third step of the chorismate pathway, which leads to the biosynthesis of aromatic amino acids. Catalyzes the cis-dehydration of 3-dehydroquinate (DHQ) and introduces the first double bond of the aromatic ring to yield 3-dehydroshikimate. The chain is 3-dehydroquinate dehydratase from Lactococcus lactis subsp. cremoris (strain SK11).